The sequence spans 1169 residues: Flocculation protein FLO10 (1169 aa).

An N-terminal signal peptide occupies residues 1–24 (MPVAARYIFLTGLFLLSVANVALG). The region spanning 111-271 (PVKRGVKLCS…GTEVNDDFEG (161 aa)) is the PA14 domain. N-linked (GlcNAc...) asparagine glycans are attached at residues N122, N157, and N279. 10 tandem repeats follow at residues 303–326 (SSWSSSEVCTECTETESTSYVTPY), 330–356 (SSWSSSEVCTECTETESTSTSTPYVTS), 357–383 (SSSSSSEVCTECTETESTSYVTPYVSS), 384–419 (STAAANYTSSFSSSSEVCTECTETESTSTSTPYVTS), 420–446 (SSWSSSEVCTECTETESTSYVTPYVSS), 447–482 (STAAANYTSSFSSSSEVCTECTETESTSTSTPYVTS), 483–509 (SSSSSSEVCTECTETESTSYVTPYVSS), 510–545 (STAAANYTSSFSSSSEVCTECTETESTSTSTPYVTS), 546–572 (SSWSSSEVCTECTETESTSYVTPYVSS), and 573–608 (STAAANYTSSFSSSSEVCTECTETESTSTSTPYATS). The tract at residues 303 to 572 (SSWSSSEVCT…TSYVTPYVSS (270 aa)) is 6 X 27 AA approximate repeats, Ser/Thr-rich. Residues 384 to 608 (STAAANYTSS…TSTSTPYATS (225 aa)) are 4 X 36 AA approximate repeats, Ser/Thr-rich. N389 carries N-linked (GlcNAc...) asparagine glycosylation. N452 is a glycosylation site (N-linked (GlcNAc...) asparagine). N-linked (GlcNAc...) asparagine glycosylation occurs at N515. Residues N578, N656, and N686 are each glycosylated (N-linked (GlcNAc...) asparagine). The span at 798–819 (TKVSSSESSESHRTSPTTSSES) shows a compositional bias: low complexity. 3 disordered regions span residues 798 to 837 (TKVSSSESSESHRTSPTTSSESGIKSSGVEIESTSTSSFS), 856 to 920 (TPSS…SRDR), and 1070 to 1107 (RNNNFVPTSGTTSIETHTTTTSNASENSDNVSASEAVS). The segment covering 856 to 884 (TPSSPISTVAPRSTGLNSQTESTNSSKET) has biased composition (polar residues). The N-linked (GlcNAc...) asparagine glycan is linked to N879. The span at 886–902 (SSENSASVMPSSSATSP) shows a compositional bias: low complexity. Positions 906 to 916 (KVTSDETSSGF) are enriched in polar residues. Over residues 1077-1107 (TSGTTSIETHTTTTSNASENSDNVSASEAVS) the composition is skewed to low complexity. N-linked (GlcNAc...) asparagine glycans are attached at residues N1092 and N1099. G1146 carries the GPI-anchor amidated glycine lipid modification. Residues 1147-1169 (IANHLLTNSGISIFIASLLLAIV) constitute a propeptide, removed in mature form.

This sequence belongs to the flocculin family. Extensively O-glycosylated. In terms of processing, the GPI-anchor is attached to the protein in the endoplasmic reticulum and serves to target the protein to the cell surface. There, the glucosamine-inositol phospholipid moiety is cleaved off and the GPI-modified mannoprotein is covalently attached via its lipidless GPI glycan remnant to the 1,6-beta-glucan of the outer cell wall layer.

It localises to the secreted. The protein resides in the cell wall. The protein localises to the membrane. Its function is as follows. Cell wall protein that participates directly in adhesive cell-cell interactions during yeast flocculation, a reversible, asexual and Ca(2+)-dependent process in which cells adhere to form aggregates (flocs) consisting of thousands of cells. The lectin-like protein sticks out of the cell wall of flocculent cells and selectively binds mannose residues in the cell walls of adjacent cells. Activity is inhibited by mannose, glucose, maltose and sucrose. Also involved in cell-substrate adhesion, haploid invasive growth and diploid pseudohyphae formation. The polypeptide is Flocculation protein FLO10 (FLO10) (Saccharomyces cerevisiae (strain ATCC 204508 / S288c) (Baker's yeast)).